The primary structure comprises 388 residues: AdoMet-dependent heme synthase (388 aa).

The segment covering 1–12 has biased composition (low complexity); sequence MHNANHPHGNGH. A disordered region spans residues 1–29; that stretch reads MHNANHPHGNGHPAEKKGMGAHSGAMNMP. Residues 34–257 enclose the Radical SAM core domain; sequence DGSPACRLIA…TSMHLKATCA (224 aa). Positions 50, 54, and 57 each coordinate [4Fe-4S] cluster.

It belongs to the radical SAM superfamily. Requires [4Fe-4S] cluster as cofactor.

It carries out the reaction Fe-coproporphyrin III + 2 S-adenosyl-L-methionine = heme b + 2 5'-deoxyadenosine + 2 L-methionine + 2 CO2. Its pathway is porphyrin-containing compound metabolism; protoheme biosynthesis. Involved in siroheme-dependent heme b biosynthesis. Catalyzes the conversion of Fe-coproporphyrin III into heme by the oxidative decarboxylation of two propionate side chains. This chain is AdoMet-dependent heme synthase, found in Oleidesulfovibrio alaskensis (strain ATCC BAA-1058 / DSM 17464 / G20) (Desulfovibrio alaskensis).